Reading from the N-terminus, the 346-residue chain is Phenylalanine--tRNA ligase alpha subunit (346 aa).

Residue Glu-264 coordinates Mg(2+).

This sequence belongs to the class-II aminoacyl-tRNA synthetase family. Phe-tRNA synthetase alpha subunit type 1 subfamily. As to quaternary structure, tetramer of two alpha and two beta subunits. Mg(2+) is required as a cofactor.

The protein resides in the cytoplasm. The enzyme catalyses tRNA(Phe) + L-phenylalanine + ATP = L-phenylalanyl-tRNA(Phe) + AMP + diphosphate + H(+). The sequence is that of Phenylalanine--tRNA ligase alpha subunit from Leifsonia xyli subsp. xyli (strain CTCB07).